Consider the following 357-residue polypeptide: UDP-N-acetylglucosamine--N-acetylmuramyl-(pentapeptide) pyrophosphoryl-undecaprenol N-acetylglucosamine transferase (357 aa).

UDP-N-acetyl-alpha-D-glucosamine-binding positions include 13-15, Asn-125, Arg-161, Ser-189, Ile-243, and Gln-288; that span reads TGG.

Belongs to the glycosyltransferase 28 family. MurG subfamily.

The protein localises to the cell inner membrane. The catalysed reaction is di-trans,octa-cis-undecaprenyl diphospho-N-acetyl-alpha-D-muramoyl-L-alanyl-D-glutamyl-meso-2,6-diaminopimeloyl-D-alanyl-D-alanine + UDP-N-acetyl-alpha-D-glucosamine = di-trans,octa-cis-undecaprenyl diphospho-[N-acetyl-alpha-D-glucosaminyl-(1-&gt;4)]-N-acetyl-alpha-D-muramoyl-L-alanyl-D-glutamyl-meso-2,6-diaminopimeloyl-D-alanyl-D-alanine + UDP + H(+). The protein operates within cell wall biogenesis; peptidoglycan biosynthesis. Its function is as follows. Cell wall formation. Catalyzes the transfer of a GlcNAc subunit on undecaprenyl-pyrophosphoryl-MurNAc-pentapeptide (lipid intermediate I) to form undecaprenyl-pyrophosphoryl-MurNAc-(pentapeptide)GlcNAc (lipid intermediate II). This chain is UDP-N-acetylglucosamine--N-acetylmuramyl-(pentapeptide) pyrophosphoryl-undecaprenol N-acetylglucosamine transferase, found in Polynucleobacter asymbioticus (strain DSM 18221 / CIP 109841 / QLW-P1DMWA-1) (Polynucleobacter necessarius subsp. asymbioticus).